The chain runs to 722 residues: Polyribonucleotide nucleotidyltransferase (722 aa).

2 residues coordinate Mg(2+): D486 and D492. The region spanning 553–612 (PRITTIQIRPEFIKNVIGPGGKVIKDIIARTGAAINIEDSGRVDIASANGEAVKAAIAMI) is the KH domain. The S1 motif domain occupies 622 to 690 (GKIYTGTVRK…KTGKIRLSRK (69 aa)). Residues 696–722 (RAAQQGAAAGEAAAQPAPAPTQPDAKA) are disordered.

It belongs to the polyribonucleotide nucleotidyltransferase family. It depends on Mg(2+) as a cofactor.

The protein localises to the cytoplasm. The enzyme catalyses RNA(n+1) + phosphate = RNA(n) + a ribonucleoside 5'-diphosphate. Its function is as follows. Involved in mRNA degradation. Catalyzes the phosphorolysis of single-stranded polyribonucleotides processively in the 3'- to 5'-direction. This Myxococcus xanthus (strain DK1622) protein is Polyribonucleotide nucleotidyltransferase.